We begin with the raw amino-acid sequence, 354 residues long: Rhodopsin (354 aa).

Topologically, residues 1 to 36 (MNGTEGENFYVPMSNKTGVVRSPFDYPQYYLGEPWM) are extracellular. Asn2 and Asn15 each carry an N-linked (GlcNAc...) asparagine glycan. The chain crosses the membrane as a helical span at residues 37–61 (FSALAAYMFFLILTGLPVNFLTLFV). The Cytoplasmic segment spans residues 62-73 (TIQHKKLRQPLN). The helical transmembrane segment at 74 to 96 (YILLNLAVSDLFMVFGGFTTTII) threads the bilayer. Residues 97-110 (TSMNGYFIFGPAGC) are Extracellular-facing. Cys110 and Cys187 form a disulfide bridge. A helical membrane pass occupies residues 111 to 133 (NFEGFFATLGGEVGLWCLVVLAI). Residues 134–136 (ERY) carry the 'Ionic lock' involved in activated form stabilization motif. Residues 134–152 (ERYMVVCKPMANFRFGSQH) lie on the Cytoplasmic side of the membrane. A helical membrane pass occupies residues 153–173 (AIIGVVFTWIMALSCAGPPLV). The Extracellular portion of the chain corresponds to 174 to 202 (GWSRYIPEGLQCSCGVDYYTMKPEVNNES). The chain crosses the membrane as a helical span at residues 203-224 (FVIYMFVVHFTIPLIVIFFCYG). The Cytoplasmic segment spans residues 225–252 (RLVCTVKEAAAQQQESESTQRAEREVTR). The chain crosses the membrane as a helical span at residues 253–274 (MVIIMVVAFLICWVPYASVAFY). The Extracellular portion of the chain corresponds to 275–286 (IFINQGCDFTPF). Residues 287-308 (FMTVPAFFAKSSAVYNPLIYIL) form a helical membrane-spanning segment. Lys296 is modified (N6-(retinylidene)lysine). At 309 to 354 (MNKQFRNCMITTICLGKNPFEEEESTSASASKTEASSVSSSQVAPA) the chain is on the cytoplasmic side. Residue Cys322 is the site of S-palmitoyl cysteine attachment. Positions 333–354 (STSASASKTEASSVSSSQVAPA) are disordered. Low complexity predominate over residues 334–354 (TSASASKTEASSVSSSQVAPA).

Belongs to the G-protein coupled receptor 1 family. Opsin subfamily. Phosphorylated on some or all of the serine and threonine residues present in the C-terminal region. Post-translationally, contains one covalently linked retinal chromophore.

The protein resides in the membrane. Its subcellular location is the cell projection. It is found in the cilium. It localises to the photoreceptor outer segment. Photoreceptor required for image-forming vision at low light intensity. While most salt water fish species use retinal as chromophore, most freshwater fish use 3-dehydroretinal, or a mixture of retinal and 3-dehydroretinal. Light-induced isomerization of 11-cis to all-trans retinal triggers a conformational change that activates signaling via G-proteins. Subsequent receptor phosphorylation mediates displacement of the bound G-protein alpha subunit by arrestin and terminates signaling. The chain is Rhodopsin (rho) from Leucoraja erinaceus (Little skate).